Consider the following 349-residue polypeptide: tRNA pseudouridine synthase D (349 aa).

Residue phenylalanine 27 coordinates substrate. Aspartate 80 acts as the Nucleophile in catalysis. Residue asparagine 129 coordinates substrate. The 149-residue stretch at 155 to 303 folds into the TRUD domain; that stretch reads GVPNYFGAQR…VEAARRAMLL (149 aa). Phenylalanine 329 provides a ligand contact to substrate.

It belongs to the pseudouridine synthase TruD family.

The enzyme catalyses uridine(13) in tRNA = pseudouridine(13) in tRNA. Functionally, responsible for synthesis of pseudouridine from uracil-13 in transfer RNAs. The chain is tRNA pseudouridine synthase D from Escherichia coli O7:K1 (strain IAI39 / ExPEC).